A 143-amino-acid chain; its full sequence is Succinate dehydrogenase assembly factor 2, mitochondrial (143 aa).

It belongs to the SDHAF2 family. Interacts with the flavoprotein subunit within the SDH catalytic dimer.

It localises to the mitochondrion matrix. Its function is as follows. Plays an essential role in the assembly of succinate dehydrogenase (SDH), an enzyme complex (also referred to as respiratory complex II) that is a component of both the tricarboxylic acid (TCA) cycle and the mitochondrial electron transport chain, and which couples the oxidation of succinate to fumarate with the reduction of ubiquinone (coenzyme Q) to ubiquinol. Required for flavinylation (covalent attachment of FAD) of the flavoprotein subunit of the SDH catalytic dimer. The chain is Succinate dehydrogenase assembly factor 2, mitochondrial from Schizosaccharomyces japonicus (strain yFS275 / FY16936) (Fission yeast).